Consider the following 1292-residue polypeptide: Sorbin and SH3 domain-containing protein 1 (1292 aa).

Disordered regions lie at residues Met1–Asp29, Leu73–Glu158, His214–Leu275, and Arg318–Val381. Residues Arg74 to Ser89 are compositionally biased toward low complexity. Thr82 carries the phosphothreonine modification. A phosphoserine mark is found at Ser86 and Ser89. Residues Thr93 to Leu102 are compositionally biased toward basic and acidic residues. Phosphoserine occurs at positions 105, 114, 137, 146, 242, and 259. Residues Leu114–Ser128 are compositionally biased toward polar residues. The span at Ser240–Pro252 shows a compositional bias: pro residues. Polar residues predominate over residues Ala266–Leu275. Phosphoserine is present on Ser341. Position 344 is a phosphothreonine (Thr344). 2 positions are modified to phosphoserine: Glu346 and Ser350. The span at Ala354–Arg365 shows a compositional bias: basic and acidic residues. A SoHo domain is found at Val366 to Asp469. 3 positions are modified to phosphoserine: Ser369, Ser374, and Asn387. The segment at Leu405–Ser534 is disordered. The segment covering Tyr437 to Pro450 has biased composition (polar residues). A phosphoserine mark is found at Ser452, Ser465, Asp469, Ser472, Arg478, and Ser481. Positions Ser510–Ser534 are enriched in basic and acidic residues. Tyr536 is modified (phosphotyrosine; by ABL1). Ser556, Asn603, Ser609, and Ser640 each carry phosphoserine. A disordered region spans residues Ala628–Pro650. Tyr654 is subject to Phosphotyrosine; by ABL1. Ser665 and Lys700 each carry phosphoserine. The segment at Pro692–His716 is disordered. A Phosphothreonine modification is found at Thr708. 4 positions are modified to phosphoserine: Ser713, Ile730, Asp735, and Ile765. Positions Ser793–Pro852 constitute an SH3 1 domain. The residue at position 862 (Thr862) is a Phosphothreonine. An SH3 2 domain is found at Leu867 to Arg928. Position 923 is a phosphoserine (Val923). Tyr937 bears the Phosphotyrosine mark. Over residues Ser944–Pro954 the composition is skewed to low complexity. Disordered regions lie at residues Ser944–Ala976, Ser1041–Leu1064, Gln1106–Cys1150, and Thr1162–Ser1230. Ser945 and Ser953 each carry phosphoserine. A compositionally biased stretch (polar residues) spans Gln955 to Pro971. A compositionally biased stretch (polar residues) spans Gln1106–Arg1117. Over residues Pro1119–Gly1136 the composition is skewed to basic and acidic residues. A compositionally biased stretch (polar residues) spans Thr1162–Pro1172. Over residues Gln1192–Gly1203 the composition is skewed to basic and acidic residues. A compositionally biased stretch (polar residues) spans Gly1211 to Ser1230. The residue at position 1213 (Gln1213) is a Phosphoserine. An SH3 3 domain is found at Gln1231 to Leu1292. Tyr1240 is modified (phosphotyrosine; by ABL1).

Interacts (via third SH3 domain) with the Ten-1 ICD form of TENM1; the interaction induces the translocation of SORBS1 to the nucleus. Interacts with INSM1. Interacts with the long isoform of AFDN and with VCL. AFDN and VCL bind to SORBS1 in a competitive manner and do not form a ternary complex. Interacts with ABL1, CBL, CBLB and INPPL1/SHIP2 through the third SH3 domain. Interaction with ABL1 occurs only after insulin stimulation while this has no effect on the interaction with INPPL1. Interacts with the insulin receptor but dissociates from it following insulin stimulation. Also interacts with SCA7, PTK2/FAK1 and flotillin. Interacts (via SH3 domain 2) with PXN. Post-translationally, O-glycosylated. In terms of tissue distribution, detected in skeletal muscle (at protein level). Widely expressed with highest levels in heart and skeletal muscle.

Its subcellular location is the cell junction. It is found in the adherens junction. The protein resides in the cell membrane. It localises to the cytoplasm. The protein localises to the cytoskeleton. Its subcellular location is the focal adhesion. It is found in the nucleus. The protein resides in the nucleus matrix. Functionally, plays a role in tyrosine phosphorylation of CBL by linking CBL to the insulin receptor. Required for insulin-stimulated glucose transport. Involved in formation of actin stress fibers and focal adhesions. This chain is Sorbin and SH3 domain-containing protein 1, found in Homo sapiens (Human).